We begin with the raw amino-acid sequence, 345 residues long: MLKVESISKDYREFKLREISFDVREGEHFIILGPSGSGKTVLLEIIAGIISPDRGRILLRGEDITGLPPEKRNFSYIPQNYALFPHMTVFDNIAFGLKLRKIPRKEVARKVREVAESLGIDHLLHRKPRTLSGGEQQRVAIARALVVKPELLLMDEPFANLDVQTKSKLIREMKRWRKEFGFTAIHVTHSFEEALSLGDRVGIMLRGRLVQVGDVRDVFSKPKSEEVARFLGFENIIEGVANGRILKVGDLRIELPREVWGKVRVGIRPEDITIFMEGVKTSARNVFKARVEGIEDLGALVKLTLNLGGIILRAFITRSSLIELGIREGEEVYASFKASAIHVFP.

An ABC transporter domain is found at 2–231 (LKVESISKDY…PKSEEVARFL (230 aa)). 33-40 (GPSGSGKT) is an ATP binding site. The Mop domain occupies 280-345 (KTSARNVFKA…FKASAIHVFP (66 aa)).

Belongs to the ABC transporter superfamily. Sulfate/tungstate importer (TC 3.A.1.6) family. The complex is composed of two ATP-binding proteins (WtpC), two transmembrane proteins (WtpB) and a solute-binding protein (WtpA).

The protein resides in the cell membrane. The enzyme catalyses tungstate(in) + ATP + H2O = tungstate(out) + ADP + phosphate + H(+). Functionally, part of the ABC transporter complex WtpABC involved in molybdate/tungstate import. Responsible for energy coupling to the transport system. The chain is Molybdate/tungstate import ATP-binding protein WtpC (wtpC) from Pyrococcus horikoshii (strain ATCC 700860 / DSM 12428 / JCM 9974 / NBRC 100139 / OT-3).